The sequence spans 290 residues: Probable ECF RNA polymerase sigma factor SigI (290 aa).

Residues 11–74 (WRAHRAYLVD…LCLDHIKSAS (64 aa)) are sigma-70 factor domain-2. The Polymerase core binding motif lies at 34–37 (DMVQ). Residues 110–162 (LALLIMLERLGPAERVVFVLHEIFGLPYQQIATTIGSQASTCRQLAHRARRKI) are sigma-70 factor domain-4_2. Residues 137–156 (YQQIATTIGSQASTCRQLAH) constitute a DNA-binding region (H-T-H motif).

Belongs to the sigma-70 factor family. ECF subfamily. In terms of assembly, interacts transiently with the RNA polymerase catalytic core formed by RpoA, RpoB, RpoC and RpoZ (2 alpha, 1 beta, 1 beta' and 1 omega subunit) to form the RNA polymerase holoenzyme that can initiate transcription.

Sigma factors are initiation factors that promote the attachment of RNA polymerase to specific initiation sites and are then released. Extracytoplasmic function (ECF) sigma factors are held in an inactive form by a cognate anti-sigma factor until released, although no anti-sigma factor is known for this protein. This chain is Probable ECF RNA polymerase sigma factor SigI (sigI), found in Mycobacterium tuberculosis (strain CDC 1551 / Oshkosh).